The chain runs to 490 residues: MERGRGMGKTALLAVLCLCLRGAAGSDPEAEMNFEGIESKFSLRTPAEPDEDVCYLVPGQMDSLAQCNFNHTSKTFVVIHGWTVTGMYESWVPKLVDALYKREPDSNVIVVDWLVRAQQHYPVSAAYTKLVGKDVAMFIDWMEEKFNYPLNNVHLLGYSLGAHAAGIAGSLTKKKVNRITGLDPAGPTFEYADAPIRLSPDDADFVDVLHTYTRGSPDRSIGIQKPVGHIDIYPNGGGFQPGCNLGEALRLIAEKGFSDVDQLVKCSHERSIHLFIDSLLYEEKPSMAYRCNTKEAFEKGLCLSCRKNRCNNLGYKVNRVRTKRNTKMYLKTRAQMPYKVFHYQVKIHFFGKTNVTKVDQPFLISLYGTLDESENIPFTLPEVSSNKTFSFLIYTEVDIGDLLMLKLQWEKDTFFSWSDWWTPFAFTIQRVRVKSGETQKKVVFCSRDGSSRLGKGEEAAIFVKCLEQPVSRKRGGAKKASKENSAHESA.

Positions 1-25 (MERGRGMGKTALLAVLCLCLRGAAG) are cleaved as a signal peptide. Positions 32-53 (MNFEGIESKFSLRTPAEPDEDV) are interaction with GPIHBP1. A disulfide bridge connects residues C54 and C67. N70 carries an N-linked (GlcNAc...) (complex) asparagine glycan. 3'-nitrotyrosine is present on Y121. Catalysis depends on S159, which acts as the Nucleophile. The active-site Charge relay system is D183. Y191 carries the post-translational modification 3'-nitrotyrosine. Ca(2+)-binding residues include A194, R197, S199, and D202. C243 and C266 are joined by a disulfide. Residues 243–266 (CNLGEALRLIAEKGFSDVDQLVKC) form an essential for determining substrate specificity region. The Charge relay system role is filled by H268. Intrachain disulfides connect C291–C310 and C302–C305. Residues 341-464 (FHYQVKIHFF…KGEEAAIFVK (124 aa)) form the PLAT domain. Y343 bears the 3'-nitrotyrosine mark. Residues N354 and N386 are each glycosylated (N-linked (GlcNAc...) asparagine). The tract at residues 417–421 (WSDWW) is important for interaction with lipoprotein particles. An important for heparin binding region spans residues 430-434 (RVRVK). 430–441 (RVRVKSGETQKK) serves as a coordination point for heparin. The interval 443–467 (VFCSRDGSSRLGKGEEAAIFVKCLE) is interaction with GPIHBP1. The cysteines at positions 445 and 465 are disulfide-linked. The interval 471 to 490 (SRKRGGAKKASKENSAHESA) is disordered. The span at 480–490 (ASKENSAHESA) shows a compositional bias: basic and acidic residues.

The protein belongs to the AB hydrolase superfamily. Lipase family. Homodimer. Interacts with GPIHBP1 with 1:1 stoichiometry. Interacts with APOC2; the interaction activates LPL activity in the presence of lipids. Interaction with heparan sulfate proteoglycans is required to protect LPL against loss of activity. Associates with lipoprotein particles in blood plasma. Interacts with LMF1 and SEL1L; interaction with SEL1L is required to prevent aggregation of newly synthesized LPL in the endoplasmic reticulum (ER), and for normal export of LPL from the ER to the extracellular space. N-glycan at Asn-70 is a triantennary complex oligosaccharide containing sialic acid, galactose, mannose, and N-acetylglucosamine, the reducing GlcNAc being sulfated at C6. In terms of processing, tyrosine nitration after lipopolysaccharide (LPS) challenge down-regulates the lipase activity.

It is found in the cell membrane. Its subcellular location is the secreted. The protein localises to the extracellular space. The protein resides in the extracellular matrix. It carries out the reaction a triacylglycerol + H2O = a diacylglycerol + a fatty acid + H(+). The enzyme catalyses a 1,2-diacyl-sn-glycero-3-phosphocholine + H2O = a 2-acyl-sn-glycero-3-phosphocholine + a fatty acid + H(+). The catalysed reaction is 1,2,3-tri-(9Z-octadecenoyl)-glycerol + H2O = di-(9Z)-octadecenoylglycerol + (9Z)-octadecenoate + H(+). It catalyses the reaction 1,2-di-(9Z-octadecenoyl)-sn-glycero-3-phosphocholine + H2O = (9Z-octadecenoyl)-sn-glycero-3-phosphocholine + (9Z)-octadecenoate + H(+). It carries out the reaction 1,2,3-tributanoylglycerol + H2O = dibutanoylglycerol + butanoate + H(+). The enzyme catalyses 1,2-dihexadecanoyl-sn-glycero-3-phosphocholine + H2O = hexadecanoyl-sn-glycero-3-phosphocholine + hexadecanoate + H(+). With respect to regulation, ca(2+) binding promotes protein stability and formation of the active homodimer. In terms of biological role, key enzyme in triglyceride metabolism. Catalyzes the hydrolysis of triglycerides from circulating chylomicrons and very low density lipoproteins (VLDL), and thereby plays an important role in lipid clearance from the blood stream, lipid utilization and storage. Although it has both phospholipase and triglyceride lipase activities it is primarily a triglyceride lipase with low but detectable phospholipase activity. Mediates margination of triglyceride-rich lipoprotein particles in capillaries. Recruited to its site of action on the luminal surface of vascular endothelium by binding to GPIHBP1 and cell surface heparan sulfate proteoglycans. This Gallus gallus (Chicken) protein is Lipoprotein lipase (LPL).